Here is a 466-residue protein sequence, read N- to C-terminus: Tryptophan synthase beta chain 2, chloroplastic (466 aa).

The residue at position 161 (lysine 161) is an N6-(pyridoxal phosphate)lysine.

It belongs to the TrpB family. As to quaternary structure, tetramer of two alpha and two beta chains. Pyridoxal 5'-phosphate is required as a cofactor.

The protein resides in the plastid. Its subcellular location is the chloroplast. It catalyses the reaction (1S,2R)-1-C-(indol-3-yl)glycerol 3-phosphate + L-serine = D-glyceraldehyde 3-phosphate + L-tryptophan + H2O. Its pathway is amino-acid biosynthesis; L-tryptophan biosynthesis; L-tryptophan from chorismate: step 5/5. The beta subunit is responsible for the synthesis of L-tryptophan from indole and L-serine. This chain is Tryptophan synthase beta chain 2, chloroplastic (TSB), found in Camptotheca acuminata (Happy tree).